Here is a 91-residue protein sequence, read N- to C-terminus: Small ribosomal subunit protein bS18 (91 aa).

The protein belongs to the bacterial ribosomal protein bS18 family. In terms of assembly, part of the 30S ribosomal subunit. Forms a tight heterodimer with protein bS6.

Binds as a heterodimer with protein bS6 to the central domain of the 16S rRNA, where it helps stabilize the platform of the 30S subunit. In Burkholderia multivorans (strain ATCC 17616 / 249), this protein is Small ribosomal subunit protein bS18.